A 436-amino-acid polypeptide reads, in one-letter code: Putative UDP-arabinose 4-epimerase 4 (436 aa).

Residues 1–20 form a disordered region; the sequence is MLNSSGVRTQRRSPRPLSLG. Residues 1–60 are Cytoplasmic-facing; the sequence is MLNSSGVRTQRRSPRPLSLGGRKIITPTKFAYDHHNPDKVLDFVEMDCLEPKTKNNLTGK. Residues 61-81 form a helical; Signal-anchor for type II membrane protein membrane-spanning segment; sequence LLLVASLLILAIIVISQSSSF. Topologically, residues 82–436 are lumenal; it reads TSPSAFSQRE…KIHPHGYNSY (355 aa). 96–127 lines the NAD(+) pocket; that stretch reads HVLVTGGAGYIGSHAALRLLRDSYRVTIVDNL. Catalysis depends on Y244, which acts as the Proton acceptor.

It belongs to the NAD(P)-dependent epimerase/dehydratase family. It depends on NAD(+) as a cofactor.

The protein resides in the golgi apparatus. Its subcellular location is the golgi stack membrane. It carries out the reaction UDP-beta-L-arabinopyranose = UDP-alpha-D-xylose. The protein operates within nucleotide-sugar biosynthesis; UDP-L-arabinose biosynthesis; UDP-L-arabinose from UDP-alpha-D-xylose: step 1/1. It participates in cell wall biogenesis; cell wall polysaccharide biosynthesis. This chain is Putative UDP-arabinose 4-epimerase 4, found in Arabidopsis thaliana (Mouse-ear cress).